The primary structure comprises 272 residues: uncharacterized protein (272 aa).

The protein localises to the periplasm. Functionally, may be involved in ulvan degradation. Ulvan is the main polysaccharide component of the Ulvales (green seaweed) cell wall. It is composed of disaccharide building blocks comprising 3-sulfated rhamnose (Rha3S) linked to D-glucuronic acid (GlcA), L-iduronic acid (IduA), or D-xylose (Xyl). This is an uncharacterized protein from Formosa agariphila (strain DSM 15362 / KCTC 12365 / LMG 23005 / KMM 3901 / M-2Alg 35-1).